We begin with the raw amino-acid sequence, 447 residues long: UPF0210 protein OEOE_0945 (447 aa).

The protein belongs to the UPF0210 family. Homodimer.

The protein is UPF0210 protein OEOE_0945 of Oenococcus oeni (strain ATCC BAA-331 / PSU-1).